The following is a 199-amino-acid chain: Imidazoleglycerol-phosphate dehydratase (199 aa).

This sequence belongs to the imidazoleglycerol-phosphate dehydratase family.

It is found in the cytoplasm. The catalysed reaction is D-erythro-1-(imidazol-4-yl)glycerol 3-phosphate = 3-(imidazol-4-yl)-2-oxopropyl phosphate + H2O. It functions in the pathway amino-acid biosynthesis; L-histidine biosynthesis; L-histidine from 5-phospho-alpha-D-ribose 1-diphosphate: step 6/9. The chain is Imidazoleglycerol-phosphate dehydratase from Kineococcus radiotolerans (strain ATCC BAA-149 / DSM 14245 / SRS30216).